Here is a 60-residue protein sequence, read N- to C-terminus: Large ribosomal subunit protein bL32 (60 aa).

This sequence belongs to the bacterial ribosomal protein bL32 family.

The sequence is that of Large ribosomal subunit protein bL32 from Fervidobacterium nodosum (strain ATCC 35602 / DSM 5306 / Rt17-B1).